A 447-amino-acid chain; its full sequence is Phosphoglucosamine mutase (447 aa).

Serine 100 serves as the catalytic Phosphoserine intermediate. Mg(2+)-binding residues include serine 100, aspartate 239, aspartate 241, and aspartate 243. At serine 100 the chain carries Phosphoserine.

Belongs to the phosphohexose mutase family. Mg(2+) serves as cofactor. Post-translationally, activated by phosphorylation.

It catalyses the reaction alpha-D-glucosamine 1-phosphate = D-glucosamine 6-phosphate. Its function is as follows. Catalyzes the conversion of glucosamine-6-phosphate to glucosamine-1-phosphate. This Thermoanaerobacter pseudethanolicus (strain ATCC 33223 / 39E) (Clostridium thermohydrosulfuricum) protein is Phosphoglucosamine mutase.